The chain runs to 245 residues: Ribonuclease 3 (245 aa).

Residues 18 to 146 (LSKFLENLSI…FVGAIYLDSG (129 aa)) enclose the RNase III domain. Glutamate 59 provides a ligand contact to Mg(2+). The active site involves aspartate 63. Mg(2+) is bound by residues aspartate 132 and glutamate 135. Glutamate 135 is a catalytic residue. In terms of domain architecture, DRBM spans 173 to 242 (DYKSLLQEYV…AEVALKAMEN (70 aa)).

This sequence belongs to the ribonuclease III family. Homodimer. Requires Mg(2+) as cofactor.

The protein resides in the cytoplasm. The enzyme catalyses Endonucleolytic cleavage to 5'-phosphomonoester.. Functionally, digests double-stranded RNA. Involved in the processing of primary rRNA transcript to yield the immediate precursors to the large and small rRNAs (23S and 16S). Processes some mRNAs, and tRNAs when they are encoded in the rRNA operon. Processes pre-crRNA and tracrRNA of type II CRISPR loci if present in the organism. This Borreliella burgdorferi (strain ATCC 35210 / DSM 4680 / CIP 102532 / B31) (Borrelia burgdorferi) protein is Ribonuclease 3.